Here is an 89-residue protein sequence, read N- to C-terminus: Small ribosomal subunit protein uS19 (89 aa).

Belongs to the universal ribosomal protein uS19 family.

In terms of biological role, protein S19 forms a complex with S13 that binds strongly to the 16S ribosomal RNA. This chain is Small ribosomal subunit protein uS19, found in Xanthomonas axonopodis pv. citri (strain 306).